The following is a 340-amino-acid chain: MVKMYYEADVKQEVLRGKTIAIIGYGSQGHAQAQNLRDSGYKVVVGLRPGKSWDVAAKDGFEVLTVAEATKRADVVQILMPDERQAQVYRDEIAPNLKSGAALCFSHGFNIHYAQIVPPADVDVIMAAPKSPGHLVRRVYQEGFGVPGLIAIYQDATGNAKDLALAYSSGIGCTKAGVIETSFREETETDLFGEQAVLCGGASELVKAGFDTLVEAGYAPEIAYFECLHELKLIVDLMYEGGLARMRYSISDTAEYGDYSTGRRIITDETRKEMKKVLAEIQDGTFARNWILENQANRPGFTSRRRLESEHGIEVVGEQLRGMMSWINKDTKKEEVKIGQ.

In terms of domain architecture, KARI N-terminal Rossmann spans 2–181 (VKMYYEADVK…GCTKAGVIET (180 aa)). NADP(+) is bound by residues 25–28 (YGSQ), Arg48, Ser52, and 82–85 (DERQ). Residue His107 is part of the active site. Gly133 lines the NADP(+) pocket. Positions 182–327 (SFREETETDL…EQLRGMMSWI (146 aa)) constitute a KARI C-terminal knotted domain. Asp190, Glu194, Glu226, and Glu230 together coordinate Mg(2+). Ser251 contributes to the substrate binding site.

Belongs to the ketol-acid reductoisomerase family. Mg(2+) is required as a cofactor.

The enzyme catalyses (2R)-2,3-dihydroxy-3-methylbutanoate + NADP(+) = (2S)-2-acetolactate + NADPH + H(+). It catalyses the reaction (2R,3R)-2,3-dihydroxy-3-methylpentanoate + NADP(+) = (S)-2-ethyl-2-hydroxy-3-oxobutanoate + NADPH + H(+). The protein operates within amino-acid biosynthesis; L-isoleucine biosynthesis; L-isoleucine from 2-oxobutanoate: step 2/4. Its pathway is amino-acid biosynthesis; L-valine biosynthesis; L-valine from pyruvate: step 2/4. Functionally, involved in the biosynthesis of branched-chain amino acids (BCAA). Catalyzes an alkyl-migration followed by a ketol-acid reduction of (S)-2-acetolactate (S2AL) to yield (R)-2,3-dihydroxy-isovalerate. In the isomerase reaction, S2AL is rearranged via a Mg-dependent methyl migration to produce 3-hydroxy-3-methyl-2-ketobutyrate (HMKB). In the reductase reaction, this 2-ketoacid undergoes a metal-dependent reduction by NADPH to yield (R)-2,3-dihydroxy-isovalerate. The chain is Ketol-acid reductoisomerase (NADP(+)) from Brevibacillus brevis (strain 47 / JCM 6285 / NBRC 100599).